The primary structure comprises 705 residues: MSNLHLYTSARFRNFPTTFSLRHHHNDPNNQRRRSIFSKLRDKTLDPGGDLITRWNHIFLITCLLALFLDPLYFYLPIVQAGTACMSIDVRFGIFVTCFRNLADLSFLIHILLKFKTAFVSKSSRVFGRGELVMDRREIAIRYLKSEFVIDLAATLPLPQIMIWFVIPNAGEFRYAAHQNHTLSLIVLIQYVPRFLVMLPLNRRIIKATGVAAKTAWSGAAYNLILYLLVSHVLGSVWYVLSIQRQHECWRRECIKEMNATHSPSCSLLFLDCGSLHDPGRQAWMRITRVLSNCDARNDDDQHFQFGMFGDAFTNDVTSSPFFDKYFYCLWWGLRNLSSYGQSLAASTLSSETIFSCFICVAGLVFFSHLIGNVQNYLQSTTARLDEWRVRRRDTEEWMRHRQLPDELQERVRRFVQYKWLTTRGVDEEAILRALPLDLRRQIQRHLCLALVRRVPFFAQMDDQLLDAICERLVPSLNTKDTYVIREGDPVNEMLFIIRGQMESSTTDGGRSGFFNSITLRPGDFCGEELLTWALVPNINHNLPLSTRTVRTLSEVEAFALRAEDLKFVANQFRRLHSKKLQHAFRYYSHQWRAWGTCFIQAAWRRYMKRKLAMELARQEEEDDYFYDDDGDYQFEEDMPESNNNNGDENSSNNQNLSATILASKFAANTKRGVLGNQRGSTRIDPDHPTLKMPKMFKPEDPGFF.

The Cytoplasmic segment spans residues 1 to 57 (MSNLHLYTSARFRNFPTTFSLRHHHNDPNNQRRRSIFSKLRDKTLDPGGDLITRWNH). The chain crosses the membrane as a helical span at residues 58–78 (IFLITCLLALFLDPLYFYLPI). At 79–91 (VQAGTACMSIDVR) the chain is on the extracellular side. Residues 92–112 (FGIFVTCFRNLADLSFLIHIL) form a helical membrane-spanning segment. Residues 113–147 (LKFKTAFVSKSSRVFGRGELVMDRREIAIRYLKSE) are Cytoplasmic-facing. Residues 148–168 (FVIDLAATLPLPQIMIWFVIP) form a helical membrane-spanning segment. Residues 169–180 (NAGEFRYAAHQN) are Extracellular-facing. A helical membrane pass occupies residues 181–201 (HTLSLIVLIQYVPRFLVMLPL). Over 202 to 222 (NRRIIKATGVAAKTAWSGAAY) the chain is Cytoplasmic. A helical transmembrane segment spans residues 223 to 243 (NLILYLLVSHVLGSVWYVLSI). The Extracellular segment spans residues 244–353 (QRQHECWRRE…LAASTLSSET (110 aa)). A helical transmembrane segment spans residues 354–374 (IFSCFICVAGLVFFSHLIGNV). The Cytoplasmic portion of the chain corresponds to 375 to 705 (QNYLQSTTAR…MFKPEDPGFF (331 aa)). Residues 457-580 (FFAQ…HSKK) and E528 contribute to the a nucleoside 3',5'-cyclic phosphate site. The calmodulin-binding stretch occupies residues 573–588 (FRRLHSKKLQHAFRYY). In terms of domain architecture, IQ spans 593–622 (RAWGTCFIQAAWRRYMKRKLAMELARQEEE). 2 disordered regions span residues 636–655 (EEDMPESNNNNGDENSSNNQ) and 672–705 (RGVLGNQRGSTRIDPDHPTLKMPKMFKPEDPGFF). Positions 642–655 (SNNNNGDENSSNNQ) are enriched in low complexity.

Belongs to the cyclic nucleotide-gated cation channel (TC 1.A.1.5) family. As to quaternary structure, homotetramer or heterotetramer.

Its subcellular location is the cell membrane. Putative cyclic nucleotide-gated ion channel. The chain is Probable cyclic nucleotide-gated ion channel 16 (CNGC16) from Arabidopsis thaliana (Mouse-ear cress).